Consider the following 276-residue polypeptide: Urease accessory protein UreD (276 aa).

The protein belongs to the UreD family. As to quaternary structure, ureD, UreF and UreG form a complex that acts as a GTP-hydrolysis-dependent molecular chaperone, activating the urease apoprotein by helping to assemble the nickel containing metallocenter of UreC. The UreE protein probably delivers the nickel.

The protein localises to the cytoplasm. Functionally, required for maturation of urease via the functional incorporation of the urease nickel metallocenter. The protein is Urease accessory protein UreD of Verminephrobacter eiseniae (strain EF01-2).